The sequence spans 335 residues: Nucleoid-associated protein Ent638_2782 (335 aa).

Belongs to the YejK family.

Its subcellular location is the cytoplasm. It localises to the nucleoid. The sequence is that of Nucleoid-associated protein Ent638_2782 from Enterobacter sp. (strain 638).